We begin with the raw amino-acid sequence, 341 residues long: MKQSIILGIESSCDDTSAAIISGRKILSNVAATQAIHNEYGGVVPELASRAHQQNIIPVIEQSIQKANIQQNEICAIGFTRGPGLLGSLLVGTSFAKSLAMSLEAPLIEVNHLQAHILAHFIEDANPNPPKFPFLCLTVSGGHTMIVLVKDYFDMEIIGKTIDDAAGEAFDKIGKIFDLDYPAGPIIDKKSQNGSPNAFTFNKPKLEGYDYSFSGIKTSVLYFIQKELKKNPQFVNENIDDLCASVQKNIIEILMTKLEKAASDLGIKEIAIAGGVSANSALRQAMRENEQKLGWNIYIPKFEYTTDNAAMIAMVAQLKYERGEFANLSTTATARYELNVK.

His112 and His116 together coordinate Fe cation. Residues Thr138 to Gly142, Asp171, Gly184, Asp188, and Asn279 each bind substrate. Fe cation is bound at residue Asp307.

Belongs to the KAE1 / TsaD family. The cofactor is Fe(2+).

It is found in the cytoplasm. The catalysed reaction is L-threonylcarbamoyladenylate + adenosine(37) in tRNA = N(6)-L-threonylcarbamoyladenosine(37) in tRNA + AMP + H(+). Functionally, required for the formation of a threonylcarbamoyl group on adenosine at position 37 (t(6)A37) in tRNAs that read codons beginning with adenine. Is involved in the transfer of the threonylcarbamoyl moiety of threonylcarbamoyl-AMP (TC-AMP) to the N6 group of A37, together with TsaE and TsaB. TsaD likely plays a direct catalytic role in this reaction. The sequence is that of tRNA N6-adenosine threonylcarbamoyltransferase from Riemerella anatipestifer (Moraxella anatipestifer).